The sequence spans 376 residues: Acetylornithine aminotransferase (376 aa).

Pyridoxal 5'-phosphate contacts are provided by residues 96-97 and Phe-128; that span reads GT. Arg-131 provides a ligand contact to N(2)-acetyl-L-ornithine. Residue 213–216 coordinates pyridoxal 5'-phosphate; it reads DEVQ. The residue at position 242 (Lys-242) is an N6-(pyridoxal phosphate)lysine. Ser-270 lines the N(2)-acetyl-L-ornithine pocket. Thr-271 is a pyridoxal 5'-phosphate binding site.

This sequence belongs to the class-III pyridoxal-phosphate-dependent aminotransferase family. ArgD subfamily. Homodimer. It depends on pyridoxal 5'-phosphate as a cofactor.

It is found in the cytoplasm. It carries out the reaction N(2)-acetyl-L-ornithine + 2-oxoglutarate = N-acetyl-L-glutamate 5-semialdehyde + L-glutamate. It participates in amino-acid biosynthesis; L-arginine biosynthesis; N(2)-acetyl-L-ornithine from L-glutamate: step 4/4. The chain is Acetylornithine aminotransferase from Aquifex aeolicus (strain VF5).